A 594-amino-acid chain; its full sequence is DNA polymerase II small subunit (594 aa).

Belongs to the DNA polymerase delta/II small subunit family. As to quaternary structure, heterodimer of a large subunit and a small subunit.

The enzyme catalyses DNA(n) + a 2'-deoxyribonucleoside 5'-triphosphate = DNA(n+1) + diphosphate. It catalyses the reaction Exonucleolytic cleavage in the 3'- to 5'-direction to yield nucleoside 5'-phosphates.. Its function is as follows. Possesses two activities: a DNA synthesis (polymerase) and an exonucleolytic activity that degrades single-stranded DNA in the 3' to 5' direction. Has a template-primer preference which is characteristic of a replicative DNA polymerase. This Methanocaldococcus jannaschii (strain ATCC 43067 / DSM 2661 / JAL-1 / JCM 10045 / NBRC 100440) (Methanococcus jannaschii) protein is DNA polymerase II small subunit (polB).